Consider the following 528-residue polypeptide: MPISLGNAFIKNFLGKAPDWYKVAIIAFLIINPIVFFLINPFVAGWLLVAEFIFTLAMALKCYPLQPGGLLAIEAIAIGMTSPAQVKHELVANIEVLLLLVFMVAGIYFMKQLLLFIFTKILLGIRSKTLLSLAFCFAAAFLSAFLDALTVIAVVISVAVGFYSIYHKVASGNPIGDHDHTQDDTITELTRDDLENYRAFLRSLLMHAGVGTALGGVTTMVGEPQNLIIADQAGWLFGEFLIRMSPVTLPVFICGLITCALVEKLKVFGYGAKLPDNVRQILVDFDREERKTRTNQDVAKLWVQGIIAVWLIVALALHLAAVGLIGLSVIILATSFTGVIEEHSMGKAFEEALPFTALLAVFFSIVAVIIDQELFKPVIDAVLAVEDKGTQLALFYVANGLLSMVSDNVFVGTVYINEVKSALMEGLITREQFDLLAVAINTGTNLPSVATPNGQAAFLFLLTSALAPLIRLSYGRMVVMALPYTVVLAIVGLMGIMFFLEPATASFYDAGWIAPHTGDLTPVVSGGH.

A run of 11 helical transmembrane segments spans residues 23-43 (VAII…NPFV), 45-65 (GWLL…CYPL), 90-110 (LVAN…IYFM), 136-156 (CFAA…AVVI), 204-224 (LLMH…VGEP), 237-257 (FGEF…CGLI), 305-325 (GIIA…VGLI), 350-370 (EEAL…AVII), 392-412 (LALF…VFVG), 450-470 (ATPN…APLI), and 479-499 (VMAL…IMFF).

This sequence belongs to the NhaB Na(+)/H(+) (TC 2.A.34) antiporter family.

The protein resides in the cell inner membrane. The catalysed reaction is 2 Na(+)(in) + 3 H(+)(out) = 2 Na(+)(out) + 3 H(+)(in). In terms of biological role, na(+)/H(+) antiporter that extrudes sodium in exchange for external protons. Can also transport lithium and potassium. In Vibrio parahaemolyticus serotype O3:K6 (strain RIMD 2210633), this protein is Na(+)/H(+) antiporter NhaB.